A 308-amino-acid polypeptide reads, in one-letter code: Methionyl-tRNA formyltransferase (308 aa).

109–112 (SLLP) provides a ligand contact to (6S)-5,6,7,8-tetrahydrofolate.

The protein belongs to the Fmt family.

It catalyses the reaction L-methionyl-tRNA(fMet) + (6R)-10-formyltetrahydrofolate = N-formyl-L-methionyl-tRNA(fMet) + (6S)-5,6,7,8-tetrahydrofolate + H(+). Attaches a formyl group to the free amino group of methionyl-tRNA(fMet). The formyl group appears to play a dual role in the initiator identity of N-formylmethionyl-tRNA by promoting its recognition by IF2 and preventing the misappropriation of this tRNA by the elongation apparatus. The chain is Methionyl-tRNA formyltransferase from Caulobacter vibrioides (strain NA1000 / CB15N) (Caulobacter crescentus).